The following is a 788-amino-acid chain: Endonuclease MutS2 (788 aa).

335 to 342 (GPNTGGKT) is an ATP binding site. A disordered region spans residues 688-708 (VKSASKTKKRSGGTSITKQSA). A compositionally biased stretch (polar residues) spans 699–708 (GGTSITKQSA). The 76-residue stretch at 713–788 (LDLRGVRVEE…GHGVTIIELK (76 aa)) folds into the Smr domain.

It belongs to the DNA mismatch repair MutS family. MutS2 subfamily. Homodimer. Binds to stalled ribosomes, contacting rRNA.

Its function is as follows. Endonuclease that is involved in the suppression of homologous recombination and thus may have a key role in the control of bacterial genetic diversity. Functionally, acts as a ribosome collision sensor, splitting the ribosome into its 2 subunits. Detects stalled/collided 70S ribosomes which it binds and splits by an ATP-hydrolysis driven conformational change. Acts upstream of the ribosome quality control system (RQC), a ribosome-associated complex that mediates the extraction of incompletely synthesized nascent chains from stalled ribosomes and their subsequent degradation. Probably generates substrates for RQC. In Exiguobacterium sibiricum (strain DSM 17290 / CCUG 55495 / CIP 109462 / JCM 13490 / 255-15), this protein is Endonuclease MutS2.